We begin with the raw amino-acid sequence, 472 residues long: Aspartyl/glutamyl-tRNA(Asn/Gln) amidotransferase subunit B (472 aa).

The protein belongs to the GatB/GatE family. GatB subfamily. As to quaternary structure, heterotrimer of A, B and C subunits.

It catalyses the reaction L-glutamyl-tRNA(Gln) + L-glutamine + ATP + H2O = L-glutaminyl-tRNA(Gln) + L-glutamate + ADP + phosphate + H(+). It carries out the reaction L-aspartyl-tRNA(Asn) + L-glutamine + ATP + H2O = L-asparaginyl-tRNA(Asn) + L-glutamate + ADP + phosphate + 2 H(+). Its function is as follows. Allows the formation of correctly charged Asn-tRNA(Asn) or Gln-tRNA(Gln) through the transamidation of misacylated Asp-tRNA(Asn) or Glu-tRNA(Gln) in organisms which lack either or both of asparaginyl-tRNA or glutaminyl-tRNA synthetases. The reaction takes place in the presence of glutamine and ATP through an activated phospho-Asp-tRNA(Asn) or phospho-Glu-tRNA(Gln). This is Aspartyl/glutamyl-tRNA(Asn/Gln) amidotransferase subunit B from Campylobacter jejuni subsp. jejuni serotype O:2 (strain ATCC 700819 / NCTC 11168).